The primary structure comprises 301 residues: Isonocardicin synthase (301 aa).

Monomer.

The catalysed reaction is nocardicin G + S-adenosyl-L-methionine = isonocardicin C + S-methyl-5'-thioadenosine + H(+). The enzyme catalyses nocardicin E + S-adenosyl-L-methionine = isonocardicin A + S-methyl-5'-thioadenosine + H(+). It functions in the pathway antibiotic biosynthesis. Functionally, involved in the biosynthesis of the beta-lactam antibiotic nocardicin A. In the presence of S-adenosyl-L-methionine (AdoMet), catalyzes the transfer of a 3-amino-3-carboxypropyl group from AdoMet to nocardicin G, forming isonocardicin C. Can also catalyze the transformation of nocardicin E and F to isonocardicin A and B, respectively, but in vivo substrate is probably nocardicin G. The chain is Isonocardicin synthase from Nocardia uniformis subsp. tsuyamanensis.